A 968-amino-acid chain; its full sequence is RNA polymerase-associated protein RapA (968 aa).

One can recognise a Helicase ATP-binding domain in the interval 164 to 334; sequence DVGRRHAPRV…FARLRLLDPD (171 aa). ATP is bound at residue 177 to 184; sequence DEVGLGKT. The DEAH box signature appears at 280–283; sequence DEAH. The Helicase C-terminal domain occupies 490–643; that stretch reads RVEWLMGYLT…HTCPTGRAVY (154 aa).

The protein belongs to the SNF2/RAD54 helicase family. RapA subfamily. As to quaternary structure, interacts with the RNAP. Has a higher affinity for the core RNAP than for the holoenzyme. Its ATPase activity is stimulated by binding to RNAP.

Functionally, transcription regulator that activates transcription by stimulating RNA polymerase (RNAP) recycling in case of stress conditions such as supercoiled DNA or high salt concentrations. Probably acts by releasing the RNAP, when it is trapped or immobilized on tightly supercoiled DNA. Does not activate transcription on linear DNA. Probably not involved in DNA repair. This is RNA polymerase-associated protein RapA from Erwinia tasmaniensis (strain DSM 17950 / CFBP 7177 / CIP 109463 / NCPPB 4357 / Et1/99).